Here is a 274-residue protein sequence, read N- to C-terminus: Undecaprenyl-diphosphatase (274 aa).

6 consecutive transmembrane segments (helical) span residues 44–64 (AKVF…LVYW), 85–105 (LNVV…GKMI), 109–129 (LFIP…ILWA), 185–205 (ATDF…AYSL), 214–234 (VADI…AWLC), and 247–267 (FIPF…TAWT).

This sequence belongs to the UppP family.

It is found in the cell inner membrane. The enzyme catalyses di-trans,octa-cis-undecaprenyl diphosphate + H2O = di-trans,octa-cis-undecaprenyl phosphate + phosphate + H(+). In terms of biological role, catalyzes the dephosphorylation of undecaprenyl diphosphate (UPP). Confers resistance to bacitracin. The chain is Undecaprenyl-diphosphatase from Variovorax paradoxus (strain S110).